Reading from the N-terminus, the 202-residue chain is Inner membrane-spanning protein YciB (202 aa).

Helical transmembrane passes span F3–A23, I46–L66, M74–N94, W100–F120, L145–Y165, and F173–L193.

The protein belongs to the YciB family.

The protein resides in the cell inner membrane. Functionally, plays a role in cell envelope biogenesis, maintenance of cell envelope integrity and membrane homeostasis. The protein is Inner membrane-spanning protein YciB of Azoarcus sp. (strain BH72).